The following is a 92-amino-acid chain: DNA-directed RNA polymerase subunit Rpo11 (92 aa).

It belongs to the archaeal Rpo11/eukaryotic RPB11/RPC19 RNA polymerase subunit family. In terms of assembly, part of the RNA polymerase complex.

It localises to the cytoplasm. It catalyses the reaction RNA(n) + a ribonucleoside 5'-triphosphate = RNA(n+1) + diphosphate. DNA-dependent RNA polymerase (RNAP) catalyzes the transcription of DNA into RNA using the four ribonucleoside triphosphates as substrates. The polypeptide is DNA-directed RNA polymerase subunit Rpo11 (Saccharolobus islandicus (strain Y.N.15.51 / Yellowstone #2) (Sulfolobus islandicus)).